A 273-amino-acid polypeptide reads, in one-letter code: Photosystem I chlorophyll a/b-binding protein 3-1, chloroplastic (273 aa).

The transit peptide at 1-39 (MAAQALVSSSLTSSVQTARQIFGSKPVASASQKKSSFVV) directs the protein to the chloroplast. W56 serves as a coordination point for chlorophyll b. Chlorophyll a contacts are provided by F76, S82, and E100. R105 contributes to the chlorophyll b binding site. Residues 106–126 (FAMLGAAGAIAPEILGKAGLI) traverse the membrane as a helical segment. I140 contributes to the chlorophyll b binding site. Residues 146–166 (YTYWADNYTLFVLEMALMGFA) form a helical membrane-spanning segment. The chlorophyll b site is built by E167 and R170. S195 carries the phosphoserine modification. 6 residues coordinate chlorophyll a: K224, E225, N228, R230, Q242, and H257. Residues 231-251 (LAMLAILGYFIQGLVTGVGPY) traverse the membrane as a helical segment. A chlorophyll b-binding site is contributed by F272.

This sequence belongs to the light-harvesting chlorophyll a/b-binding (LHC) protein family. The LHC complex consists of chlorophyll a-b binding proteins. Red-emitting heterodimer with LHCA2. Interacts with LHCA5. Binds to carotenoids. Binds at least 14 chlorophylls (8 Chl-a and 6 Chl-b) and carotenoids such as lutein and neoxanthin. serves as cofactor. Post-translationally, photoregulated by reversible phosphorylation of its threonine residues.

It is found in the plastid. Its subcellular location is the chloroplast thylakoid membrane. Functionally, the light-harvesting complex (LHC) functions as a light receptor, it captures and delivers excitation energy to photosystems with which it is closely associated, here photosystem I. The chain is Photosystem I chlorophyll a/b-binding protein 3-1, chloroplastic from Arabidopsis thaliana (Mouse-ear cress).